A 377-amino-acid polypeptide reads, in one-letter code: Probable purine permease 22 (377 aa).

A run of 10 helical transmembrane segments spans residues 39–59 (WLRVSIYAIFVIFCQPLATVL), 71–91 (TYVVTLLQLIGFPVLILFRFF), 107–127 (SPSFTTLASVYLCTGLLVSAY), 128–148 (AYLSAVGLLYLPVSTFSLILA), 166–186 (FTPLIVNSLFLLTVSSALLVV), 202–222 (VIGFICTIGASAGIGLVLSLI), 238–258 (VLDLANYQSLVATCVVLIGLF), 283–303 (TLASAAIFWQVYTVGCVGLIF), 309–329 (FSNSITAVGLPIVPVVAVIVF), and 338–358 (IFSIILAIWGFLSFVYQHYLD).

It belongs to the purine permeases (TC 2.A.7.14) family.

Its subcellular location is the membrane. The protein is Probable purine permease 22 (PUP22) of Arabidopsis thaliana (Mouse-ear cress).